Here is a 151-residue protein sequence, read N- to C-terminus: MQINLLSIQKNNNDEFSKIDEHYTKLIKKFCSFNEICVFNNKINQAQNTNSIEAKKSYTNALNPYKKGFCIALDEKGKEFTSVEFAKLLQDKNEITFFIGGAYGFEQEFIAQMHTSIALSKMTLVHKFAKTMLLEQIYRAFCINTNHPYHK.

Residues Leu-73, Gly-100, and 119 to 124 (LSKMTL) contribute to the S-adenosyl-L-methionine site.

This sequence belongs to the RNA methyltransferase RlmH family. Homodimer.

It localises to the cytoplasm. It carries out the reaction pseudouridine(1915) in 23S rRNA + S-adenosyl-L-methionine = N(3)-methylpseudouridine(1915) in 23S rRNA + S-adenosyl-L-homocysteine + H(+). In terms of biological role, specifically methylates the pseudouridine at position 1915 (m3Psi1915) in 23S rRNA. The sequence is that of Ribosomal RNA large subunit methyltransferase H from Campylobacter lari (strain RM2100 / D67 / ATCC BAA-1060).